Consider the following 387-residue polypeptide: 8-amino-7-oxononanoate synthase (387 aa).

R31 and R38 together coordinate substrate. Position 118–119 (118–119 (GY)) interacts with pyridoxal 5'-phosphate. H143 lines the substrate pocket. Residues S191, 216 to 219 (DDAH), and 236 to 239 (TLSK) each bind pyridoxal 5'-phosphate. Residue K239 is modified to N6-(pyridoxal phosphate)lysine. A substrate-binding site is contributed by T348.

Belongs to the class-II pyridoxal-phosphate-dependent aminotransferase family. BioF subfamily. Homodimer. The cofactor is pyridoxal 5'-phosphate.

The catalysed reaction is 6-carboxyhexanoyl-[ACP] + L-alanine + H(+) = (8S)-8-amino-7-oxononanoate + holo-[ACP] + CO2. It functions in the pathway cofactor biosynthesis; biotin biosynthesis. Catalyzes the decarboxylative condensation of pimeloyl-[acyl-carrier protein] and L-alanine to produce 8-amino-7-oxononanoate (AON), [acyl-carrier protein], and carbon dioxide. In Methylorubrum populi (strain ATCC BAA-705 / NCIMB 13946 / BJ001) (Methylobacterium populi), this protein is 8-amino-7-oxononanoate synthase.